The sequence spans 212 residues: Proteasome subunit beta (212 aa).

Positions 1 to 11 (MSQEHQDVKTG) are cleaved as a propeptide — removed in mature form; by autocatalysis. Catalysis depends on Thr-12, which acts as the Nucleophile.

It belongs to the peptidase T1B family. The 20S proteasome core is composed of 14 alpha and 14 beta subunits that assemble into four stacked heptameric rings, resulting in a barrel-shaped structure. The two inner rings, each composed of seven catalytic beta subunits, are sandwiched by two outer rings, each composed of seven alpha subunits. The catalytic chamber with the active sites is on the inside of the barrel. Has a gated structure, the ends of the cylinder being occluded by the N-termini of the alpha-subunits. Is capped at one or both ends by the proteasome regulatory ATPase, PAN.

It localises to the cytoplasm. The catalysed reaction is Cleavage of peptide bonds with very broad specificity.. With respect to regulation, the formation of the proteasomal ATPase PAN-20S proteasome complex, via the docking of the C-termini of PAN into the intersubunit pockets in the alpha-rings, triggers opening of the gate for substrate entry. Interconversion between the open-gate and close-gate conformations leads to a dynamic regulation of the 20S proteasome proteolysis activity. Its function is as follows. Component of the proteasome core, a large protease complex with broad specificity involved in protein degradation. The protein is Proteasome subunit beta of Methanocorpusculum labreanum (strain ATCC 43576 / DSM 4855 / Z).